Consider the following 254-residue polypeptide: D-aminoacyl-tRNA deacylase (254 aa).

Residues 61–83 (KPTLTVHTPGNLTEDNSHGGNPE) form a disordered region. Positions 65–74 (TVHTPGNLTE) are enriched in polar residues.

This sequence belongs to the DtdA deacylase family. Monomer. Zn(2+) serves as cofactor.

The catalysed reaction is a D-aminoacyl-tRNA + H2O = a tRNA + a D-alpha-amino acid + H(+). The enzyme catalyses glycyl-tRNA(Ala) + H2O = tRNA(Ala) + glycine + H(+). Its function is as follows. D-aminoacyl-tRNA deacylase with broad substrate specificity. By recycling D-aminoacyl-tRNA to D-amino acids and free tRNA molecules, this enzyme counteracts the toxicity associated with the formation of D-aminoacyl-tRNA entities in vivo. This Methanococcus maripaludis (strain C7 / ATCC BAA-1331) protein is D-aminoacyl-tRNA deacylase.